Reading from the N-terminus, the 658-residue chain is UvrABC system protein B (658 aa).

The Helicase ATP-binding domain occupies 25–178 (KSLKNKNHYQ…KSFLLKLVEM (154 aa)). 38–45 (GVTGSGKT) serves as a coordination point for ATP. Positions 91-114 (HFDYYQPESYIPRRDLFIEKDSSI) match the Beta-hairpin motif. A Helicase C-terminal domain is found at 433-607 (QVQDLFDEIK…ELKLRDDETK (175 aa)). Residues 623 to 658 (EKIIKELDKKMRECAKNLDFEEAMHLRDEIAKLRTL) form the UVR domain.

It belongs to the UvrB family. Forms a heterotetramer with UvrA during the search for lesions. Interacts with UvrC in an incision complex.

It localises to the cytoplasm. Functionally, the UvrABC repair system catalyzes the recognition and processing of DNA lesions. A damage recognition complex composed of 2 UvrA and 2 UvrB subunits scans DNA for abnormalities. Upon binding of the UvrA(2)B(2) complex to a putative damaged site, the DNA wraps around one UvrB monomer. DNA wrap is dependent on ATP binding by UvrB and probably causes local melting of the DNA helix, facilitating insertion of UvrB beta-hairpin between the DNA strands. Then UvrB probes one DNA strand for the presence of a lesion. If a lesion is found the UvrA subunits dissociate and the UvrB-DNA preincision complex is formed. This complex is subsequently bound by UvrC and the second UvrB is released. If no lesion is found, the DNA wraps around the other UvrB subunit that will check the other stand for damage. The protein is UvrABC system protein B of Helicobacter acinonychis (strain Sheeba).